The following is a 692-amino-acid chain: UvrABC system protein C (692 aa).

The region spanning 16–95 is the GIY-YIG domain; sequence ETPGVYRFRD…IKEFDPRFNV (80 aa). One can recognise a UVR domain in the interval 208–243; sequence GRYLRRLEREMRAAAEAQEYERAARLRDDIGALRRA. Residues 492-511 are disordered; it reads GELEEYPGAPTGDDEAPETG.

It belongs to the UvrC family. In terms of assembly, interacts with UvrB in an incision complex.

The protein localises to the cytoplasm. Its function is as follows. The UvrABC repair system catalyzes the recognition and processing of DNA lesions. UvrC both incises the 5' and 3' sides of the lesion. The N-terminal half is responsible for the 3' incision and the C-terminal half is responsible for the 5' incision. This Parafrankia sp. (strain EAN1pec) protein is UvrABC system protein C.